The primary structure comprises 143 residues: Large ribosomal subunit protein bL17 (143 aa).

Positions 124-133 (GAGDRARLEA) are enriched in basic and acidic residues. The interval 124–143 (GAGDRARLEAEGTDAEAAAA) is disordered.

It belongs to the bacterial ribosomal protein bL17 family. In terms of assembly, part of the 50S ribosomal subunit. Contacts protein L32.

In Mesorhizobium japonicum (strain LMG 29417 / CECT 9101 / MAFF 303099) (Mesorhizobium loti (strain MAFF 303099)), this protein is Large ribosomal subunit protein bL17.